A 162-amino-acid polypeptide reads, in one-letter code: 2-C-methyl-D-erythritol 2,4-cyclodiphosphate synthase (162 aa).

A divalent metal cation contacts are provided by Asp9 and His11. 4-CDP-2-C-methyl-D-erythritol 2-phosphate is bound by residues 9 to 11 (DVH) and 37 to 38 (HS). Position 45 (His45) interacts with a divalent metal cation.

Belongs to the IspF family. Homotrimer. Requires a divalent metal cation as cofactor.

The catalysed reaction is 4-CDP-2-C-methyl-D-erythritol 2-phosphate = 2-C-methyl-D-erythritol 2,4-cyclic diphosphate + CMP. Its pathway is isoprenoid biosynthesis; isopentenyl diphosphate biosynthesis via DXP pathway; isopentenyl diphosphate from 1-deoxy-D-xylulose 5-phosphate: step 4/6. Functionally, involved in the biosynthesis of isopentenyl diphosphate (IPP) and dimethylallyl diphosphate (DMAPP), two major building blocks of isoprenoid compounds. Catalyzes the conversion of 4-diphosphocytidyl-2-C-methyl-D-erythritol 2-phosphate (CDP-ME2P) to 2-C-methyl-D-erythritol 2,4-cyclodiphosphate (ME-CPP) with a corresponding release of cytidine 5-monophosphate (CMP). The chain is 2-C-methyl-D-erythritol 2,4-cyclodiphosphate synthase from Petrotoga mobilis (strain DSM 10674 / SJ95).